Here is a 183-residue protein sequence, read N- to C-terminus: Protein Syd (183 aa).

It belongs to the Syd family.

The protein resides in the cell inner membrane. In terms of biological role, interacts with the SecY protein in vivo. May bind preferentially to an uncomplexed state of SecY, thus functioning either as a chelating agent for excess SecY in the cell or as a regulatory factor that negatively controls the translocase function. The chain is Protein Syd from Idiomarina loihiensis (strain ATCC BAA-735 / DSM 15497 / L2-TR).